The chain runs to 266 residues: MPYEDLVRKILTEGTLKSDRTGTGTISLFGQQMRFDLSKYFPLLTTKTVFFKGLAYELLWFLKGSSNINWLLEHNVHIWDEWADENGDLGPVYGVQWRSWPAPTPEDPNRTIDQISNVLDLIKHHPDSRRMIVSAWNPAEVEKMALPPCHALFQFYVADDKLSCQLYQRSCDMFLGVPFNIASYSLLTMMMAQQAGLKPGEFVWTGGDCHVYDNHVDQFLEQLGRKPYPYPTIEIRKADSLFDYQYEDFKVVGYQHHPTIKAPVAV.

Residues R20 and 129–130 (RR) contribute to the dUMP site. The active-site Nucleophile is the C149. DUMP contacts are provided by residues 169 to 172 (RSCD), N180, and 210 to 212 (HVY). A (6R)-5,10-methylene-5,6,7,8-tetrahydrofolate-binding site is contributed by D172. A265 lines the (6R)-5,10-methylene-5,6,7,8-tetrahydrofolate pocket.

The protein belongs to the thymidylate synthase family. Bacterial-type ThyA subfamily. In terms of assembly, homodimer.

The protein localises to the cytoplasm. It catalyses the reaction dUMP + (6R)-5,10-methylene-5,6,7,8-tetrahydrofolate = 7,8-dihydrofolate + dTMP. It functions in the pathway pyrimidine metabolism; dTTP biosynthesis. In terms of biological role, catalyzes the reductive methylation of 2'-deoxyuridine-5'-monophosphate (dUMP) to 2'-deoxythymidine-5'-monophosphate (dTMP) while utilizing 5,10-methylenetetrahydrofolate (mTHF) as the methyl donor and reductant in the reaction, yielding dihydrofolate (DHF) as a by-product. This enzymatic reaction provides an intracellular de novo source of dTMP, an essential precursor for DNA biosynthesis. The sequence is that of Thymidylate synthase from Bifidobacterium longum (strain NCC 2705).